We begin with the raw amino-acid sequence, 107 residues long: Phosphoribosyl-ATP pyrophosphatase (107 aa).

This sequence belongs to the PRA-PH family.

It localises to the cytoplasm. The enzyme catalyses 1-(5-phospho-beta-D-ribosyl)-ATP + H2O = 1-(5-phospho-beta-D-ribosyl)-5'-AMP + diphosphate + H(+). It functions in the pathway amino-acid biosynthesis; L-histidine biosynthesis; L-histidine from 5-phospho-alpha-D-ribose 1-diphosphate: step 2/9. This is Phosphoribosyl-ATP pyrophosphatase from Methylobacterium radiotolerans (strain ATCC 27329 / DSM 1819 / JCM 2831 / NBRC 15690 / NCIMB 10815 / 0-1).